Reading from the N-terminus, the 419-residue chain is UDP-N-acetylglucosamine 1-carboxyvinyltransferase (419 aa).

Residue 22–23 (KN) coordinates phosphoenolpyruvate. Residue Arg93 participates in UDP-N-acetyl-alpha-D-glucosamine binding. Cys117 serves as the catalytic Proton donor. Cys117 is subject to 2-(S-cysteinyl)pyruvic acid O-phosphothioketal. Asp307 and Ile329 together coordinate UDP-N-acetyl-alpha-D-glucosamine.

The protein belongs to the EPSP synthase family. MurA subfamily.

The protein resides in the cytoplasm. It catalyses the reaction phosphoenolpyruvate + UDP-N-acetyl-alpha-D-glucosamine = UDP-N-acetyl-3-O-(1-carboxyvinyl)-alpha-D-glucosamine + phosphate. It participates in cell wall biogenesis; peptidoglycan biosynthesis. Functionally, cell wall formation. Adds enolpyruvyl to UDP-N-acetylglucosamine. This chain is UDP-N-acetylglucosamine 1-carboxyvinyltransferase, found in Shewanella denitrificans (strain OS217 / ATCC BAA-1090 / DSM 15013).